The sequence spans 409 residues: Multifunctional CCA protein (409 aa).

Positions 8 and 11 each coordinate ATP. CTP is bound by residues G8 and R11. Mg(2+) is bound by residues E21 and D23. 3 residues coordinate ATP: R91, R137, and R140. 3 residues coordinate CTP: R91, R137, and R140. Positions 228 to 329 (TGVHTLMVLT…LKALEGLDAF (102 aa)) constitute an HD domain.

Belongs to the tRNA nucleotidyltransferase/poly(A) polymerase family. Bacterial CCA-adding enzyme type 1 subfamily. Monomer. Can also form homodimers and oligomers. Mg(2+) serves as cofactor. The cofactor is Ni(2+).

It catalyses the reaction a tRNA precursor + 2 CTP + ATP = a tRNA with a 3' CCA end + 3 diphosphate. It carries out the reaction a tRNA with a 3' CCA end + 2 CTP + ATP = a tRNA with a 3' CCACCA end + 3 diphosphate. Functionally, catalyzes the addition and repair of the essential 3'-terminal CCA sequence in tRNAs without using a nucleic acid template. Adds these three nucleotides in the order of C, C, and A to the tRNA nucleotide-73, using CTP and ATP as substrates and producing inorganic pyrophosphate. tRNA 3'-terminal CCA addition is required both for tRNA processing and repair. Also involved in tRNA surveillance by mediating tandem CCA addition to generate a CCACCA at the 3' terminus of unstable tRNAs. While stable tRNAs receive only 3'-terminal CCA, unstable tRNAs are marked with CCACCA and rapidly degraded. This chain is Multifunctional CCA protein, found in Thioalkalivibrio sulfidiphilus (strain HL-EbGR7).